Here is a 276-residue protein sequence, read N- to C-terminus: Pantothenate synthetase (276 aa).

An ATP-binding site is contributed by 26–33 (MGFLHAGH). Residue H33 is the Proton donor of the active site. Q57 contacts (R)-pantoate. A beta-alanine-binding site is contributed by Q57. An ATP-binding site is contributed by 143–146 (GQKD). Q149 contributes to the (R)-pantoate binding site. ATP is bound by residues I172 and 180–183 (MSSR).

The protein belongs to the pantothenate synthetase family. In terms of assembly, homodimer.

The protein localises to the cytoplasm. The enzyme catalyses (R)-pantoate + beta-alanine + ATP = (R)-pantothenate + AMP + diphosphate + H(+). It participates in cofactor biosynthesis; (R)-pantothenate biosynthesis; (R)-pantothenate from (R)-pantoate and beta-alanine: step 1/1. In terms of biological role, catalyzes the condensation of pantoate with beta-alanine in an ATP-dependent reaction via a pantoyl-adenylate intermediate. This chain is Pantothenate synthetase, found in Herpetosiphon aurantiacus (strain ATCC 23779 / DSM 785 / 114-95).